The following is a 205-amino-acid chain: Adenylyl-sulfate kinase (205 aa).

31–38 is a binding site for ATP; it reads GLSGAGKS. Residue serine 105 is the Phosphoserine intermediate of the active site.

Belongs to the APS kinase family.

It catalyses the reaction adenosine 5'-phosphosulfate + ATP = 3'-phosphoadenylyl sulfate + ADP + H(+). It functions in the pathway sulfur metabolism; hydrogen sulfide biosynthesis; sulfite from sulfate: step 2/3. In terms of biological role, catalyzes the synthesis of activated sulfate. This chain is Adenylyl-sulfate kinase, found in Shewanella putrefaciens (strain CN-32 / ATCC BAA-453).